A 47-amino-acid chain; its full sequence is Gas vesicle protein A (47 aa).

Belongs to the gas vesicle GvpA family. In terms of assembly, the gas vesicle shell is 2 nm thick and consists of a single layer of this protein. It forms helical ribs nearly perpendicular to the long axis of the vesicle.

The protein localises to the gas vesicle shell. Functionally, gas vesicles are hollow, gas filled proteinaceous nanostructures found in some microorganisms. During planktonic growth they allow positioning of the organism at a favorable depth for light or nutrient acquisition. GvpA forms the protein shell. This chain is Gas vesicle protein A, found in Dactylococcopsis salina (Myxobaktron salinum).